The sequence spans 107 residues: Thiosulfate sulfurtransferase GlpE (107 aa).

In terms of domain architecture, Rhodanese spans 16 to 104 (KKRDIVIADV…WKAHHPTSDA (89 aa)). Cys-64 serves as the catalytic Cysteine persulfide intermediate.

The protein belongs to the GlpE family.

Its subcellular location is the cytoplasm. It catalyses the reaction thiosulfate + hydrogen cyanide = thiocyanate + sulfite + 2 H(+). The catalysed reaction is thiosulfate + [thioredoxin]-dithiol = [thioredoxin]-disulfide + hydrogen sulfide + sulfite + 2 H(+). Its function is as follows. Transferase that catalyzes the transfer of sulfur from thiosulfate to thiophilic acceptors such as cyanide or dithiols. May function in a CysM-independent thiosulfate assimilation pathway by catalyzing the conversion of thiosulfate to sulfite, which can then be used for L-cysteine biosynthesis. In Coxiella burnetii (strain CbuK_Q154) (Coxiella burnetii (strain Q154)), this protein is Thiosulfate sulfurtransferase GlpE.